The chain runs to 343 residues: Phosphate acyltransferase (343 aa).

Belongs to the PlsX family. As to quaternary structure, homodimer. Probably interacts with PlsY.

It is found in the cytoplasm. It catalyses the reaction a fatty acyl-[ACP] + phosphate = an acyl phosphate + holo-[ACP]. Its pathway is lipid metabolism; phospholipid metabolism. Catalyzes the reversible formation of acyl-phosphate (acyl-PO(4)) from acyl-[acyl-carrier-protein] (acyl-ACP). This enzyme utilizes acyl-ACP as fatty acyl donor, but not acyl-CoA. This Haemophilus ducreyi (strain 35000HP / ATCC 700724) protein is Phosphate acyltransferase.